A 331-amino-acid polypeptide reads, in one-letter code: Glycerol-3-phosphate dehydrogenase [NAD(P)+] (331 aa).

Residues Trp-11, Arg-30, and Lys-105 each coordinate NADPH. Positions 105, 134, and 136 each coordinate sn-glycerol 3-phosphate. Ala-138 contacts NADPH. Residues Lys-189, Asp-242, Ser-252, Arg-253, and Asn-254 each coordinate sn-glycerol 3-phosphate. Lys-189 (proton acceptor) is an active-site residue. Arg-253 contributes to the NADPH binding site. Residues Val-277 and Glu-279 each contribute to the NADPH site.

It belongs to the NAD-dependent glycerol-3-phosphate dehydrogenase family.

It localises to the cytoplasm. It catalyses the reaction sn-glycerol 3-phosphate + NAD(+) = dihydroxyacetone phosphate + NADH + H(+). It carries out the reaction sn-glycerol 3-phosphate + NADP(+) = dihydroxyacetone phosphate + NADPH + H(+). Its pathway is membrane lipid metabolism; glycerophospholipid metabolism. Functionally, catalyzes the reduction of the glycolytic intermediate dihydroxyacetone phosphate (DHAP) to sn-glycerol 3-phosphate (G3P), the key precursor for phospholipid synthesis. The polypeptide is Glycerol-3-phosphate dehydrogenase [NAD(P)+] (Janthinobacterium sp. (strain Marseille) (Minibacterium massiliensis)).